The primary structure comprises 203 residues: Probable GTP-binding protein EngB (203 aa).

The region spanning 21–196 (GAPEIAFLGR…WKKIFEAAGT (176 aa)) is the EngB-type G domain. GTP contacts are provided by residues 29–36 (GRSNVGKS), 55–59 (GRTQT), 79–82 (DLPG), 146–149 (TKID), and 175–177 (FSA). Positions 36 and 57 each coordinate Mg(2+).

Belongs to the TRAFAC class TrmE-Era-EngA-EngB-Septin-like GTPase superfamily. EngB GTPase family. Mg(2+) is required as a cofactor.

Its function is as follows. Necessary for normal cell division and for the maintenance of normal septation. This Koribacter versatilis (strain Ellin345) protein is Probable GTP-binding protein EngB.